We begin with the raw amino-acid sequence, 189 residues long: Peptidyl-tRNA hydrolase (189 aa).

Tyrosine 16 contributes to the tRNA binding site. Histidine 21 functions as the Proton acceptor in the catalytic mechanism. The tRNA site is built by phenylalanine 67, asparagine 69, and asparagine 115.

Belongs to the PTH family. Monomer.

Its subcellular location is the cytoplasm. The catalysed reaction is an N-acyl-L-alpha-aminoacyl-tRNA + H2O = an N-acyl-L-amino acid + a tRNA + H(+). Functionally, hydrolyzes ribosome-free peptidyl-tRNAs (with 1 or more amino acids incorporated), which drop off the ribosome during protein synthesis, or as a result of ribosome stalling. In terms of biological role, catalyzes the release of premature peptidyl moieties from peptidyl-tRNA molecules trapped in stalled 50S ribosomal subunits, and thus maintains levels of free tRNAs and 50S ribosomes. The polypeptide is Peptidyl-tRNA hydrolase (Legionella pneumophila (strain Paris)).